Here is an 829-residue protein sequence, read N- to C-terminus: MAVKTPFLKLLPLLLLLLHFPFSFSTIPLGSVIYASGSNQNWPSPNSTFSVSFVPSPSPNSFLAAVSFAGSVPIWSAGTVDSRGSLRLHTSGSLRLTNGSGTTVWDSKTDRLGVTSGSIEDTGEFILLNNRSVPVWSSFDNPTDTIVQSQNFTAGKILRSGLYSFQLERSGNLTLRWNTSAIYWNHGLNSSFSSNLSSPRLSLQTNGVVSIFESNLLGGAEIVYSGDYGDSNTFRFLKLDDDGNLRIYSSASRNSGPVNAHWSAVDQCLVYGYCGNFGICSYNDTNPICSCPSRNFDFVDVNDRRKGCKRKVELSDCSGNTTMLDLVHTRLFTYEDDPNSESFFAGSSPCRANCLSSVLCLASVSMSDGSGNCWQKHPGSFFTGYQWPSVPSTSYVKVCGPVVANTLERATKGDDNNSKVHLWIVAVAVIAGLLGLVAVEIGLWWCCCRKNPRFGTLSSHYTLLEYASGAPVQFTYKELQRCTKSFKEKLGAGGFGTVYRGVLTNRTVVAVKQLEGIEQGEKQFRMEVATISSTHHLNLVRLIGFCSQGRHRLLVYEFMRNGSLDNFLFTTDSAKFLTWEYRFNIALGTAKGITYLHEECRDCIVHCDIKPENILVDDNFAAKVSDFGLAKLLNPKDNRYNMSSVRGTRGYLAPEWLANLPITSKSDVYSYGMVLLELVSGKRNFDVSEKTNHKKFSIWAYEEFEKGNTKAILDTRLSEDQTVDMEQVMRMVKTSFWCIQEQPLQRPTMGKVVQMLEGITEIKNPLCPKTISEVSFSGNSMSTSHASMFVASGPTRSSSFSATRSFQTMGITSSGPASTRISEGSMLGS.

A signal peptide spans 1–25 (MAVKTPFLKLLPLLLLLLHFPFSFS). 2 Bulb-type lectin domains span residues 26-140 (TIPL…SSFD) and 143-260 (TDTI…PVNA). Topologically, residues 26–421 (TIPLGSVIYA…KGDDNNSKVH (396 aa)) are extracellular. Residues Asn-46, Asn-98, Asn-130, Asn-151, Asn-172, Asn-178, Asn-189, and Asn-195 are each glycosylated (N-linked (GlcNAc...) asparagine). The 38-residue stretch at 264–301 (AVDQCLVYGYCGNFGICSYNDTNPICSCPSRNFDFVDV) folds into the EGF-like domain. Intrachain disulfides connect Cys-268-Cys-280, Cys-274-Cys-289, Cys-317-Cys-399, Cys-350-Cys-373, and Cys-354-Cys-360. N-linked (GlcNAc...) asparagine glycans are attached at residues Asn-283 and Asn-320. The region spanning 317 to 399 (CSGNTTMLDL…VPSTSYVKVC (83 aa)) is the Apple domain. Asn-416 carries an N-linked (GlcNAc...) asparagine glycan. A helical transmembrane segment spans residues 422-442 (LWIVAVAVIAGLLGLVAVEIG). The Cytoplasmic segment spans residues 443 to 829 (LWWCCCRKNP…RISEGSMLGS (387 aa)). One can recognise a Protein kinase domain in the interval 484-759 (KSFKEKLGAG…GKVVQMLEGI (276 aa)). ATP-binding positions include 490–498 (LGAGGFGTV) and Lys-512. The residue at position 532 (Ser-532) is a Phosphoserine. Residues 572–589 (DSAKFLTWEYRFNIALGT) are caM-binding. The active-site Proton acceptor is Asp-608. A phosphoserine mark is found at Ser-625 and Ser-799.

It belongs to the protein kinase superfamily. Ser/Thr protein kinase family.

The protein localises to the cell membrane. It carries out the reaction L-seryl-[protein] + ATP = O-phospho-L-seryl-[protein] + ADP + H(+). The catalysed reaction is L-threonyl-[protein] + ATP = O-phospho-L-threonyl-[protein] + ADP + H(+). In Arabidopsis thaliana (Mouse-ear cress), this protein is G-type lectin S-receptor-like serine/threonine-protein kinase At1g34300.